The primary structure comprises 289 residues: MAEQTASGYIQHHLQNLTFGHLPNGEWGFAHTAAEAKEMGFWAFHVDTLGWSVALGLIFVLIFRMAAKKATSGQPGALQNFVEVLVEFVDGSVKDSFHGRSAVIAPLALTIFVWVFLMNAVDLVPVDWIPQLAMMISGDSHIPFRAVSTTDPNATLGMALSVFALIIFYSIKVKGIGGFIGELTLHPFGSKNLFVQALLIPVNFLLEFVTLIAKPISLALRLFGNMYAGELVFILIAVMFGSGLLWLSGLGVVLQWAWAVFHILIITLQAFIFMMLTIVYLSMAHEDNH.

Transmembrane regions (helical) follow at residues 43–63 (AFHV…VLIF), 101–121 (SAVI…MNAV), 160–180 (LSVF…GGFI), 193–213 (LFVQ…TLIA), 232–252 (VFIL…GLGV), and 259–279 (AVFH…LTIV).

This sequence belongs to the ATPase A chain family. F-type ATPases have 2 components, CF(1) - the catalytic core - and CF(0) - the membrane proton channel. CF(1) has five subunits: alpha(3), beta(3), gamma(1), delta(1), epsilon(1). CF(0) has three main subunits: a(1), b(2) and c(9-12). The alpha and beta chains form an alternating ring which encloses part of the gamma chain. CF(1) is attached to CF(0) by a central stalk formed by the gamma and epsilon chains, while a peripheral stalk is formed by the delta and b chains.

The protein localises to the cell inner membrane. Functionally, key component of the proton channel; it plays a direct role in the translocation of protons across the membrane. This Pseudomonas syringae pv. syringae (strain B728a) protein is ATP synthase subunit a.